The chain runs to 271 residues: Mannosyl-3-phosphoglycerate phosphatase (271 aa).

The active-site Nucleophile is the aspartate 13. Mg(2+) is bound by residues aspartate 13, aspartate 15, and aspartate 214.

It belongs to the HAD-like hydrolase superfamily. MPGP family. Requires Mg(2+) as cofactor.

It localises to the cytoplasm. It carries out the reaction 2-O-(alpha-D-mannosyl)-3-phosphoglycerate + H2O = (2R)-2-O-(alpha-D-mannosyl)-glycerate + phosphate. The polypeptide is Mannosyl-3-phosphoglycerate phosphatase (Escherichia coli O45:K1 (strain S88 / ExPEC)).